Reading from the N-terminus, the 366-residue chain is Cell division protein FtsZ 1 (366 aa).

GTP contacts are provided by residues 45–49 (GAGCN), 132–134 (GTG), Glu-163, Arg-167, and Asp-210. Acidic residues predominate over residues 344 to 354 (PEEETPLETPE). A disordered region spans residues 344–366 (PEEETPLETPEESPSIEISIPEL). Low complexity predominate over residues 355 to 366 (ESPSIEISIPEL).

It belongs to the FtsZ family. In terms of assembly, homodimer. Polymerizes to form a dynamic ring structure in a strictly GTP-dependent manner. Interacts directly with several other division proteins.

It localises to the cytoplasm. Functionally, essential cell division protein that forms a contractile ring structure (Z ring) at the future cell division site. The regulation of the ring assembly controls the timing and the location of cell division. One of the functions of the FtsZ ring is to recruit other cell division proteins to the septum to produce a new cell wall between the dividing cells. Binds GTP and shows GTPase activity. The sequence is that of Cell division protein FtsZ 1 from Pyrococcus woesei.